Here is a 214-residue protein sequence, read N- to C-terminus: Alpha-S1-casein (214 aa).

The first 15 residues, 1-15 (MKLLILTCLVAVALA), serve as a signal peptide directing secretion. Phosphoserine is present on residues serine 63, serine 79, serine 81, serine 82, serine 83, and serine 90. 2 consecutive repeats follow at residues 85–99 (EIVP…IQKE) and 125–140 (EIVP…SMKE).

Belongs to the alpha-casein family. Mammary gland specific. Secreted in milk.

It localises to the secreted. Its function is as follows. Important role in the capacity of milk to transport calcium phosphate. The sequence is that of Alpha-S1-casein (CSN1S1) from Bubalus bubalis (Domestic water buffalo).